We begin with the raw amino-acid sequence, 608 residues long: Extracellular metalloproteinase 5 (608 aa).

The first 20 residues, 1 to 20 (MHGLLLAAAGLLSLPLHVIA), serve as a signal peptide directing secretion. A propeptide spanning residues 21–244 (HPQPSTNLAG…VHNVVDYVSH (224 aa)) is cleaved from the precursor. Asparagine 285 carries an N-linked (GlcNAc...) asparagine glycan. Histidine 427 provides a ligand contact to Zn(2+). Glutamate 428 is a catalytic residue. Zn(2+) is bound at residue histidine 431. A glycan (N-linked (GlcNAc...) asparagine) is linked at asparagine 591.

This sequence belongs to the peptidase M36 family. It depends on Zn(2+) as a cofactor.

Its subcellular location is the secreted. Functionally, secreted metalloproteinase probably acting as a virulence factor. This is Extracellular metalloproteinase 5 (MEP5) from Trichophyton tonsurans (Scalp ringworm fungus).